We begin with the raw amino-acid sequence, 490 residues long: Aspartyl/glutamyl-tRNA(Asn/Gln) amidotransferase subunit B (490 aa).

This sequence belongs to the GatB/GatE family. GatB subfamily. Heterotrimer of A, B and C subunits.

The catalysed reaction is L-glutamyl-tRNA(Gln) + L-glutamine + ATP + H2O = L-glutaminyl-tRNA(Gln) + L-glutamate + ADP + phosphate + H(+). The enzyme catalyses L-aspartyl-tRNA(Asn) + L-glutamine + ATP + H2O = L-asparaginyl-tRNA(Asn) + L-glutamate + ADP + phosphate + 2 H(+). Functionally, allows the formation of correctly charged Asn-tRNA(Asn) or Gln-tRNA(Gln) through the transamidation of misacylated Asp-tRNA(Asn) or Glu-tRNA(Gln) in organisms which lack either or both of asparaginyl-tRNA or glutaminyl-tRNA synthetases. The reaction takes place in the presence of glutamine and ATP through an activated phospho-Asp-tRNA(Asn) or phospho-Glu-tRNA(Gln). This chain is Aspartyl/glutamyl-tRNA(Asn/Gln) amidotransferase subunit B, found in Methylobacterium nodulans (strain LMG 21967 / CNCM I-2342 / ORS 2060).